Consider the following 434-residue polypeptide: Nicotinate phosphoribosyltransferase (434 aa).

Phosphohistidine; by autocatalysis is present on His242.

This sequence belongs to the NAPRTase family. In terms of processing, transiently phosphorylated on a His residue during the reaction cycle. Phosphorylation strongly increases the affinity for substrates and increases the rate of nicotinate D-ribonucleotide production. Dephosphorylation regenerates the low-affinity form of the enzyme, leading to product release.

The enzyme catalyses nicotinate + 5-phospho-alpha-D-ribose 1-diphosphate + ATP + H2O = nicotinate beta-D-ribonucleotide + ADP + phosphate + diphosphate. It participates in cofactor biosynthesis; NAD(+) biosynthesis; nicotinate D-ribonucleotide from nicotinate: step 1/1. Catalyzes the synthesis of beta-nicotinate D-ribonucleotide from nicotinate and 5-phospho-D-ribose 1-phosphate at the expense of ATP. The protein is Nicotinate phosphoribosyltransferase of Mesorhizobium japonicum (strain LMG 29417 / CECT 9101 / MAFF 303099) (Mesorhizobium loti (strain MAFF 303099)).